A 323-amino-acid chain; its full sequence is MIRSTVRGVGAALPRRVVTNKDLETRLETSDEWIVQRTGIRQRHIASDDETTASLGEAAALRALDAAGLAPADIDLIVVATSTPNNTFPATAVEIQERLGIRQGFAFDMQAVCSGFVYAVTTADLYIRGGMAKRALVIGAETFSRILDWTDRTTCVLFGDGAGAIVLEAEEGQGDISDRGILAEALRSDGSHKEKLYVDGGPSTTRTVGHLRMQGREVFKHAVGMITDVIEDVFGQAGITAEDIDWFVSHQANKRIIDASAKKLGIAEEKVVITVDLHGNTSAASVPLALNHAVSQGKIQKGDLVLLEAMGGGFTWGAVLLRW.

Catalysis depends on residues C113 and H250. The ACP-binding stretch occupies residues Q251–R255. Residue N280 is part of the active site.

It belongs to the thiolase-like superfamily. FabH family. As to quaternary structure, homodimer.

It is found in the cytoplasm. It catalyses the reaction malonyl-[ACP] + acetyl-CoA + H(+) = 3-oxobutanoyl-[ACP] + CO2 + CoA. It functions in the pathway lipid metabolism; fatty acid biosynthesis. Its function is as follows. Catalyzes the condensation reaction of fatty acid synthesis by the addition to an acyl acceptor of two carbons from malonyl-ACP. Catalyzes the first condensation reaction which initiates fatty acid synthesis and may therefore play a role in governing the total rate of fatty acid production. Possesses both acetoacetyl-ACP synthase and acetyl transacylase activities. Its substrate specificity determines the biosynthesis of branched-chain and/or straight-chain of fatty acids. This Chelativorans sp. (strain BNC1) protein is Beta-ketoacyl-[acyl-carrier-protein] synthase III.